The chain runs to 393 residues: Envelope glycoprotein M (393 aa).

Residues 1-14 (MCGPRNAEAVSWRS) are Intravirion-facing. A helical membrane pass occupies residues 15–35 (WLIEVCGFALAALTLVLTLIF). The Virion surface portion of the chain corresponds to 36 to 83 (ASLPEMGFPCFYATVADYDTLNDTSGGVWTRQPLVAPALFLETPTVTS). Residues 84 to 104 (FFGFTATVLLAHALYAVAGAV) form a helical membrane-spanning segment. The Intravirion segment spans residues 105–130 (VLRREAGRLAFQPSVVLYAASTVAAP). Residues 131 to 151 (GTLMLGALCAWTLQAVVLLMA) traverse the membrane as a helical segment. Topologically, residues 152 to 154 (HKQ) are virion surface. Residues 155–175 (AGLAAAAYITHFVFLALFGAC) form a helical membrane-spanning segment. Residues 176-207 (HACKGTGDVRAALAASPPLRRVAVHARAVVTN) lie on the Intravirion side of the membrane. A helical membrane pass occupies residues 208–228 (VVLGAVGLGAAVVGLMLGVLL). Over 229-241 (ANSFHISLWKTAE) the chain is Virion surface. Residues 242–262 (AALAVFTLLALALMVFVEVVV) traverse the membrane as a helical segment. Over 263-264 (SG) the chain is Intravirion. A helical membrane pass occupies residues 265 to 285 (YVQVLPTPAFCVLVASAAFGV). Residues 286 to 303 (SAHRYFAKFSEALGETHG) lie on the Virion surface side of the membrane. Residues 304 to 324 (VVIGTRAVLAVLSLIALAMIV) traverse the membrane as a helical segment. Over 325–393 (VRLVRACIAH…EVVYENLGFE (69 aa)) the chain is Intravirion.

Belongs to the herpesviridae glycoprotein M family. In terms of assembly, interacts (via N-terminus) with gN (via N-terminus). The gM-gN heterodimer forms the gCII complex.

The protein resides in the virion membrane. The protein localises to the host Golgi apparatus. It is found in the host trans-Golgi network. It localises to the host endosome membrane. Its subcellular location is the host nucleus inner membrane. In terms of biological role, envelope glycoprotein important for virion assembly and egress. Plays a role in the correct incorporation of gH-gL into virion membrane. Directs the glycoprotein N (gN) to the host trans-Golgi network. This Suid herpesvirus 1 (SuHV-1) protein is Envelope glycoprotein M.